Here is a 436-residue protein sequence, read N- to C-terminus: Ribulose bisphosphate carboxylase large chain (436 aa).

Positions 104 and 154 each coordinate substrate. Lys156 functions as the Proton acceptor in the catalytic mechanism. Position 158 (Lys158) interacts with substrate. Lys182, Asp184, and Glu185 together coordinate Mg(2+). Position 182 is an N6-carboxylysine (Lys182). The active-site Proton acceptor is the His275. Arg276, His308, and Ser360 together coordinate substrate.

This sequence belongs to the RuBisCO large chain family. Type I subfamily. As to quaternary structure, heterohexadecamer of 8 large chains and 8 small chains; disulfide-linked. The disulfide link is formed within the large subunit homodimers. Mg(2+) serves as cofactor. The disulfide bond which can form in the large chain dimeric partners within the hexadecamer appears to be associated with oxidative stress and protein turnover.

It localises to the plastid. Its subcellular location is the chloroplast. It carries out the reaction 2 (2R)-3-phosphoglycerate + 2 H(+) = D-ribulose 1,5-bisphosphate + CO2 + H2O. The catalysed reaction is D-ribulose 1,5-bisphosphate + O2 = 2-phosphoglycolate + (2R)-3-phosphoglycerate + 2 H(+). Functionally, ruBisCO catalyzes two reactions: the carboxylation of D-ribulose 1,5-bisphosphate, the primary event in carbon dioxide fixation, as well as the oxidative fragmentation of the pentose substrate in the photorespiration process. Both reactions occur simultaneously and in competition at the same active site. This chain is Ribulose bisphosphate carboxylase large chain, found in Euglena geniculata.